Reading from the N-terminus, the 156-residue chain is Small ribosomal subunit protein uS7 (156 aa).

This sequence belongs to the universal ribosomal protein uS7 family. Part of the 30S ribosomal subunit. Contacts proteins S9 and S11.

In terms of biological role, one of the primary rRNA binding proteins, it binds directly to 16S rRNA where it nucleates assembly of the head domain of the 30S subunit. Is located at the subunit interface close to the decoding center, probably blocks exit of the E-site tRNA. The chain is Small ribosomal subunit protein uS7 from Vibrio vulnificus (strain CMCP6).